The chain runs to 290 residues: 4-hydroxy-tetrahydrodipicolinate synthase (290 aa).

A pyruvate-binding site is contributed by Thr-45. The active-site Proton donor/acceptor is Tyr-133. The active-site Schiff-base intermediate with substrate is Lys-161. Ile-202 provides a ligand contact to pyruvate.

This sequence belongs to the DapA family. Homotetramer; dimer of dimers.

It localises to the cytoplasm. It catalyses the reaction L-aspartate 4-semialdehyde + pyruvate = (2S,4S)-4-hydroxy-2,3,4,5-tetrahydrodipicolinate + H2O + H(+). It participates in amino-acid biosynthesis; L-lysine biosynthesis via DAP pathway; (S)-tetrahydrodipicolinate from L-aspartate: step 3/4. In terms of biological role, catalyzes the condensation of (S)-aspartate-beta-semialdehyde [(S)-ASA] and pyruvate to 4-hydroxy-tetrahydrodipicolinate (HTPA). This is 4-hydroxy-tetrahydrodipicolinate synthase from Alkalilimnicola ehrlichii (strain ATCC BAA-1101 / DSM 17681 / MLHE-1).